The chain runs to 679 residues: Stress-70 protein, mitochondrial (679 aa).

The N-terminal 46 residues, 1–46, are a transit peptide targeting the mitochondrion; that stretch reads MISASRAAAARLVGTAASRSPAAARPQDGWNGLSHEAFRFVSRRDY. The interaction with NFS1 stretch occupies residues 1–432; the sequence is MISASRAAAA…IQGGVLAGDV (432 aa). ADP contacts are provided by threonine 63 and asparagine 64. A nucleotide-binding domain (NBD) region spans residues 63 to 431; the sequence is TNSCVAVMEG…AIQGGVLAGD (369 aa). Residue lysine 76 is modified to N6-acetyllysine. Threonine 87 carries the phosphothreonine modification. N6-acetyllysine; alternate occurs at positions 135 and 138. Residues lysine 135 and lysine 138 each carry the N6-succinyllysine; alternate modification. Lysine 143 is subject to N6-acetyllysine. Position 206 is an N6-acetyllysine; alternate (lysine 206). An N6-succinyllysine; alternate modification is found at lysine 206. Lysine 206 is subject to N6-malonyllysine; alternate. An N6-acetyllysine mark is found at lysine 234 and lysine 288. Lysine 300 bears the N6-acetyllysine; alternate mark. An N6-succinyllysine; alternate modification is found at lysine 300. Residues glutamate 313, lysine 316, and serine 320 each coordinate ADP. Residue lysine 360 is modified to N6-acetyllysine; alternate. Position 360 is an N6-succinyllysine; alternate (lysine 360). Residue lysine 368 is modified to N6-succinyllysine. 2 residues coordinate ADP: glycine 388 and arginine 391. Lysine 394 carries the N6-succinyllysine modification. At serine 408 the chain carries Phosphoserine. Residues 432-441 form an interdomain linker region; sequence VTDVLLLDVT. The interaction with FXN and ISCU stretch occupies residues 432-679; that stretch reads VTDVLLLDVT…QKEDQKEEKQ (248 aa). The interval 442–679 is substrate-binding domain (SBD); that stretch reads PLSLGIETLG…QKEDQKEEKQ (238 aa). Arginine 513 is modified (omega-N-methylarginine). Lysine 567 and lysine 600 each carry N6-acetyllysine; alternate. N6-succinyllysine; alternate occurs at positions 567 and 600. Position 610 is an N6-succinyllysine (lysine 610). N6-acetyllysine is present on lysine 612. Lysine 646 bears the N6-acetyllysine; alternate mark. Lysine 646 is subject to N6-succinyllysine; alternate. The disordered stretch occupies residues 656–679; sequence ASEREGSGSSGTGEQKEDQKEEKQ. Over residues 669 to 679 the composition is skewed to basic and acidic residues; it reads EQKEDQKEEKQ.

Belongs to the heat shock protein 70 family. In terms of assembly, interacts strongly with the intermediate form of FXN and weakly with its mature form. Interacts with HSCB. Associates with the mitochondrial contact site and cristae organizing system (MICOS) complex, composed of at least MICOS10/MIC10, CHCHD3/MIC19, CHCHD6/MIC25, APOOL/MIC27, IMMT/MIC60, APOO/MIC23/MIC26 and QIL1/MIC13. This complex was also known under the names MINOS or MitOS complex. The MICOS complex associates with mitochondrial outer membrane proteins SAMM50, MTX1, MTX2 and DNAJC11, mitochondrial inner membrane protein TMEM11 and with HSPA9. Interacts with DNLZ, the interaction is required to prevent self-aggregation. Interacts with TESPA1. Interacts with PDPN. Interacts with NFU1, NFS1 and ISCU. Interacts with TP53; the interaction promotes TP53 degradation. Interacts (via SBD domain) with UBXN2A; the interaction with UBXN2A inhibits HSPA9/MOT-2 interaction with and degradation of TP53, thereby promotes TP53 translocation to the nucleus. Interacts with ITPR1 AND VDAC1; this interaction couples ITPR1 to VDAC1. Component of the TIM23 mitochondrial inner membrane pre-sequence translocase complex.

It is found in the mitochondrion. Its subcellular location is the nucleus. It localises to the nucleolus. The protein localises to the cytoplasm. The protein resides in the mitochondrion matrix. The enzyme catalyses ATP + H2O = ADP + phosphate + H(+). The chaperone activity is regulated by ATP-induced allosteric coupling of the nucleotide-binding (NBD) and substrate-binding (SBD) domains. ATP binding in the NBD leads to a conformational change in the NBD, which is transferred through the interdomain linker (IDL) to the substrate-binding domain (SBD). This elicits a reduced substrate affinity and a faster substrate exchange rate. Upon hydrolysis of ATP to ADP, the protein undergoes a conformational change that increases its affinity for substrate proteins. It cycles through repeated phases of ATP hydrolysis and nucleotide exchange, facilitating repeated cycles of substrate binding and release. Functions in collaboration with co-chaperones. Functions with the co-chaperone, DNLZ, to maintain solubility and regulate ATP hydrolysis. Nucleotide exchange factors, GRPEL1 and GRPEL2, accelerate nucleotide exchange. Mitochondrial chaperone that plays a key role in mitochondrial protein import, folding, and assembly. Plays an essential role in the protein quality control system, the correct folding of proteins, the re-folding of misfolded proteins, and the targeting of proteins for subsequent degradation. These processes are achieved through cycles of ATP binding, ATP hydrolysis, and ADP release, mediated by co-chaperones. In mitochondria, it associates with the TIM (translocase of the inner membrane) protein complex to assist in the import and folding of mitochondrial proteins. Plays an important role in mitochondrial iron-sulfur cluster (ISC) biogenesis. Interacts with and stabilizes ISC cluster assembly proteins FXN, NFU1, NFS1 and ISCU. Regulates erythropoiesis via stabilization of ISC assembly. Regulates mitochondrial calcium-dependent apoptosis by coupling two calcium channels, ITPR1 and VDAC1, at the mitochondria-associated endoplasmic reticulum (ER) membrane to facilitate calcium transport from the ER lumen to the mitochondria intermembrane space, providing calcium for the downstream calcium channel MCU, which releases it into the mitochondrial matrix. Although primarily located in the mitochondria, it is also found in other cellular compartments. In the cytosol, it associates with proteins involved in signaling, apoptosis, or senescence. It may play a role in cell cycle regulation via its interaction with and promotion of degradation of TP53. May play a role in the control of cell proliferation and cellular aging. Protects against reactive oxygen species (ROS). Extracellular HSPA9 plays a cytoprotective role by preventing cell lysis following immune attack by the membrane attack complex by disrupting formation of the complex. This chain is Stress-70 protein, mitochondrial, found in Mus musculus (Mouse).